The following is a 168-amino-acid chain: Phosphopantetheine adenylyltransferase (168 aa).

Threonine 14 contributes to the substrate binding site. Residues 14–15 (TF) and histidine 22 each bind ATP. Substrate is bound by residues lysine 46, leucine 78, and arginine 92. Residues 93-95 (GLR), glutamate 103, and 128-134 (YSFISSS) each bind ATP.

This sequence belongs to the bacterial CoaD family. As to quaternary structure, homohexamer. Mg(2+) serves as cofactor.

It localises to the cytoplasm. It catalyses the reaction (R)-4'-phosphopantetheine + ATP + H(+) = 3'-dephospho-CoA + diphosphate. It functions in the pathway cofactor biosynthesis; coenzyme A biosynthesis; CoA from (R)-pantothenate: step 4/5. Functionally, reversibly transfers an adenylyl group from ATP to 4'-phosphopantetheine, yielding dephospho-CoA (dPCoA) and pyrophosphate. This is Phosphopantetheine adenylyltransferase from Xanthomonas euvesicatoria pv. vesicatoria (strain 85-10) (Xanthomonas campestris pv. vesicatoria).